A 116-amino-acid chain; its full sequence is Large ribosomal subunit protein bL20 (116 aa).

This sequence belongs to the bacterial ribosomal protein bL20 family.

Functionally, binds directly to 23S ribosomal RNA and is necessary for the in vitro assembly process of the 50S ribosomal subunit. It is not involved in the protein synthesizing functions of that subunit. This is Large ribosomal subunit protein bL20 from Mycoplasmopsis agalactiae (strain NCTC 10123 / CIP 59.7 / PG2) (Mycoplasma agalactiae).